The chain runs to 205 residues: Cytochrome bo(3) ubiquinol oxidase subunit 3 (205 aa).

Residues 1–26 (MIENKFNNTILNSNSSTHDKISETKK) are Cytoplasmic-facing. Residues 27–47 (LFGLWIYLMSDCIMFAVLFAV) traverse the membrane as a helical segment. At 48-69 (YAIVSSNISINLISNKIFNLSS) the chain is on the extracellular side. The chain crosses the membrane as a helical span at residues 70–90 (ILLETFLLLLSSLSCGFVVIA). The Cytoplasmic segment spans residues 91 to 97 (MNQKRIK). The helical transmembrane segment at 98 to 118 (MIYSFLTITFIFGLIFLLMEV) threads the bilayer. Residues 119 to 138 (HEFYELIIENFGPDKNAFFS) are Extracellular-facing. A helical membrane pass occupies residues 139-159 (IFFTLVATHGVHIFFGLILIL). The Cytoplasmic segment spans residues 160–177 (SILYQIKKLGLTNSIRTR). Residues 178-198 (ILCFSVFWHFLDIIWICVFTF) traverse the membrane as a helical segment. At 199–205 (VYLNGAI) the chain is on the extracellular side.

The protein belongs to the cytochrome c oxidase subunit 3 family. Heterooctamer of two A chains, two B chains, two C chains and two D chains.

It is found in the cell membrane. In terms of biological role, cytochrome bo(3) ubiquinol terminal oxidase is the component of the aerobic respiratory chain of E.coli that predominates when cells are grown at high aeration. Has proton pump activity across the membrane in addition to electron transfer, pumping 2 protons/electron. The protein is Cytochrome bo(3) ubiquinol oxidase subunit 3 (cyoC) of Buchnera aphidicola subsp. Acyrthosiphon pisum (strain APS) (Acyrthosiphon pisum symbiotic bacterium).